The primary structure comprises 174 residues: ATP synthase subunit b (174 aa).

The chain crosses the membrane as a helical span at residues 18 to 38 (IIVVSGSFLILMFLLKHFAWG).

The protein belongs to the ATPase B chain family. F-type ATPases have 2 components, F(1) - the catalytic core - and F(0) - the membrane proton channel. F(1) has five subunits: alpha(3), beta(3), gamma(1), delta(1), epsilon(1). F(0) has three main subunits: a(1), b(2) and c(10-14). The alpha and beta chains form an alternating ring which encloses part of the gamma chain. F(1) is attached to F(0) by a central stalk formed by the gamma and epsilon chains, while a peripheral stalk is formed by the delta and b chains.

The protein localises to the cell membrane. Its function is as follows. F(1)F(0) ATP synthase produces ATP from ADP in the presence of a proton or sodium gradient. F-type ATPases consist of two structural domains, F(1) containing the extramembraneous catalytic core and F(0) containing the membrane proton channel, linked together by a central stalk and a peripheral stalk. During catalysis, ATP synthesis in the catalytic domain of F(1) is coupled via a rotary mechanism of the central stalk subunits to proton translocation. In terms of biological role, component of the F(0) channel, it forms part of the peripheral stalk, linking F(1) to F(0). The chain is ATP synthase subunit b from Enterococcus hirae (strain ATCC 9790 / DSM 20160 / JCM 8729 / LMG 6399 / NBRC 3181 / NCIMB 6459 / NCDO 1258 / NCTC 12367 / WDCM 00089 / R).